A 340-amino-acid chain; its full sequence is NAD-dependent epimerase/dehydratase terH (340 aa).

The chain crosses the membrane as a helical span at residues 7–27 (IVPPGGLVLVTGVTGFIGSYI). Asparagine 139 is a glycosylation site (N-linked (GlcNAc...) asparagine). An NADP(+)-binding site is contributed by tyrosine 176.

The protein belongs to the NAD(P)-dependent epimerase/dehydratase family. Dihydroflavonol-4-reductase subfamily.

The protein localises to the membrane. In terms of biological role, NAD-dependent epimerase/dehydratase; part of the gene cluster that mediates the biosynthesis of terrein, a fungal metabolite with ecological, antimicrobial, antiproliferative, and antioxidative activities. The first step in the pathway is performed by the polyketide synthase terA that produces 4-hydroxy-6-methylpyranon (4-HMP), orsellinic acid (OA), and 2,3-dehydro-6-hydroxymellein (2,3-dehydro-6-HM) by condensing acetyl-CoA with two, three, or four malonyl-CoA units, respectively. 4-HMP and OA are not pathway intermediates, but are rather shunt or side products. 2,3-dehydro-6-HM is further converted to 6-hydroxymellein (6-HM) by the 6-hydroxymellein synthase terB. The monooxygenases terC and terD, the multicopper oxidase terE and the Kelch-like protein terF are then involved in the transformation of 6-HM to terrein. Even if they are co-regulated with the other terrein cluster genes, terH and terI seem to be dispensable for terrein production; whereas one or both of the 2 transporters terG and terJ are probably required for efficient secretion of metabolites. This is NAD-dependent epimerase/dehydratase terH from Aspergillus terreus (strain NIH 2624 / FGSC A1156).